The sequence spans 187 residues: Elongation factor P (187 aa).

Belongs to the elongation factor P family.

The protein localises to the cytoplasm. It participates in protein biosynthesis; polypeptide chain elongation. Functionally, involved in peptide bond synthesis. Stimulates efficient translation and peptide-bond synthesis on native or reconstituted 70S ribosomes in vitro. Probably functions indirectly by altering the affinity of the ribosome for aminoacyl-tRNA, thus increasing their reactivity as acceptors for peptidyl transferase. This is Elongation factor P from Corynebacterium urealyticum (strain ATCC 43042 / DSM 7109).